Reading from the N-terminus, the 108-residue chain is ATP-dependent Clp protease adapter protein ClpS (108 aa).

The protein belongs to the ClpS family. As to quaternary structure, binds to the N-terminal domain of the chaperone ClpA.

Its function is as follows. Involved in the modulation of the specificity of the ClpAP-mediated ATP-dependent protein degradation. The sequence is that of ATP-dependent Clp protease adapter protein ClpS from Ralstonia pickettii (strain 12J).